Consider the following 188-residue polypeptide: Elongation factor P (188 aa).

Lys34 carries the N6-(3,6-diaminohexanoyl)-5-hydroxylysine modification.

The protein belongs to the elongation factor P family. May be beta-lysylated on the epsilon-amino group of Lys-34 by the combined action of EpmA and EpmB, and then hydroxylated on the C5 position of the same residue by EpmC (if this protein is present). Lysylation is critical for the stimulatory effect of EF-P on peptide-bond formation. The lysylation moiety may extend toward the peptidyltransferase center and stabilize the terminal 3-CCA end of the tRNA. Hydroxylation of the C5 position on Lys-34 may allow additional potential stabilizing hydrogen-bond interactions with the P-tRNA.

The protein localises to the cytoplasm. It functions in the pathway protein biosynthesis; polypeptide chain elongation. Involved in peptide bond synthesis. Alleviates ribosome stalling that occurs when 3 or more consecutive Pro residues or the sequence PPG is present in a protein, possibly by augmenting the peptidyl transferase activity of the ribosome. Modification of Lys-34 is required for alleviation. In Xanthomonas oryzae pv. oryzae (strain MAFF 311018), this protein is Elongation factor P.